A 177-amino-acid polypeptide reads, in one-letter code: MTPPSQEIVLDGPGISRALERMAHGIVARFPGEPLAIVGLLSQGDVIARRLVDKVKELGVEAQYGSIDISLYRDDIFKLEARPSLRSSNLPFSTDDMRVVLVDDVLYTGRTIRAALNALFDYGRPARIELACLIDRGGREVPIQPDYTGHVLDHAGAKVIVSMKEADGEDSVVIPSH.

Residues 99-111 carry the PRPP-binding motif; sequence VVLVDDVLYTGRT.

The protein belongs to the purine/pyrimidine phosphoribosyltransferase family. PyrR subfamily.

The catalysed reaction is UMP + diphosphate = 5-phospho-alpha-D-ribose 1-diphosphate + uracil. Its function is as follows. Regulates the transcription of the pyrimidine nucleotide (pyr) operon in response to exogenous pyrimidines. In terms of biological role, also displays a weak uracil phosphoribosyltransferase activity which is not physiologically significant. The polypeptide is Bifunctional protein PyrR (Akkermansia muciniphila (strain ATCC BAA-835 / DSM 22959 / JCM 33894 / BCRC 81048 / CCUG 64013 / CIP 107961 / Muc)).